Reading from the N-terminus, the 331-residue chain is Olfactory receptor 6B3 (331 aa).

Topologically, residues methionine 1–tyrosine 25 are extracellular. Asparagine 5 is a glycosylation site (N-linked (GlcNAc...) asparagine). A helical transmembrane segment spans residues leucine 26 to isoleucine 46. Residues leucine 47 to serine 54 lie on the Cytoplasmic side of the membrane. The chain crosses the membrane as a helical span at residues leucine 55–serine 75. Residues aspartate 76–threonine 99 are Extracellular-facing. Cysteine 97 and cysteine 189 are oxidised to a cystine. A helical membrane pass occupies residues glutamine 100 to tyrosine 120. The Cytoplasmic portion of the chain corresponds to aspartate 121–glycine 139. The helical transmembrane segment at leucine 140–valine 160 threads the bilayer. The Extracellular segment spans residues cysteine 161 to glutamate 196. The helical transmembrane segment at leucine 197–serine 217 threads the bilayer. The Cytoplasmic portion of the chain corresponds to tyrosine 218 to alanine 237. A helical membrane pass occupies residues phenylalanine 238–methionine 258. Residues tyrosine 259–asparagine 271 lie on the Extracellular side of the membrane. The chain crosses the membrane as a helical span at residues lysine 272–leucine 292. The Cytoplasmic portion of the chain corresponds to arginine 293–leucine 331.

The protein belongs to the G-protein coupled receptor 1 family.

The protein resides in the cell membrane. Odorant receptor. This is Olfactory receptor 6B3 (OR6B3) from Homo sapiens (Human).